The sequence spans 108 residues: Large ribosomal subunit protein uL24 (108 aa).

Belongs to the universal ribosomal protein uL24 family. As to quaternary structure, part of the 50S ribosomal subunit.

One of two assembly initiator proteins, it binds directly to the 5'-end of the 23S rRNA, where it nucleates assembly of the 50S subunit. Functionally, one of the proteins that surrounds the polypeptide exit tunnel on the outside of the subunit. In Geotalea daltonii (strain DSM 22248 / JCM 15807 / FRC-32) (Geobacter daltonii), this protein is Large ribosomal subunit protein uL24.